A 127-amino-acid polypeptide reads, in one-letter code: Protein ApaG (127 aa).

The 125-residue stretch at 3–127 folds into the ApaG domain; that stretch reads DDPRYRVEVE…FVLSVPRTLH (125 aa).

The protein is Protein ApaG of Xanthomonas axonopodis pv. citri (strain 306).